Reading from the N-terminus, the 390-residue chain is 8-amino-7-oxononanoate synthase (390 aa).

Arg19 contacts substrate. Residue 106–107 (GY) coordinates pyridoxal 5'-phosphate. His131 is a binding site for substrate. Pyridoxal 5'-phosphate contacts are provided by Ser176, His204, and Thr233. Residue Lys236 is modified to N6-(pyridoxal phosphate)lysine. Thr350 provides a ligand contact to substrate.

It belongs to the class-II pyridoxal-phosphate-dependent aminotransferase family. BioF subfamily. Homodimer. Requires pyridoxal 5'-phosphate as cofactor.

The catalysed reaction is 6-carboxyhexanoyl-[ACP] + L-alanine + H(+) = (8S)-8-amino-7-oxononanoate + holo-[ACP] + CO2. It participates in cofactor biosynthesis; biotin biosynthesis. Its function is as follows. Catalyzes the decarboxylative condensation of pimeloyl-[acyl-carrier protein] and L-alanine to produce 8-amino-7-oxononanoate (AON), [acyl-carrier protein], and carbon dioxide. The polypeptide is 8-amino-7-oxononanoate synthase (Pseudomonas entomophila (strain L48)).